We begin with the raw amino-acid sequence, 188 residues long: uncharacterized protein (188 aa).

An L5-specific motif motif is present at residues 62 to 77 (ITGEKPLIKLNESTEK).

It is found in the mitochondrion. This is an uncharacterized protein from Dictyostelium discoideum (Social amoeba).